The following is a 184-amino-acid chain: Holliday junction branch migration complex subunit RuvA (184 aa).

The domain I stretch occupies residues 1-64 (MIVAVEGIIT…EDADLLYGFL (64 aa)). Residues 65-145 (DEKEKRMFEM…ANDGEQYKIE (81 aa)) are domain II. Glu145 is a region of interest (flexible linker). Residues 145-184 (ETISALENLGFKRDKINKILLNCKSTNTADLIKEALKKLA) are domain III.

This sequence belongs to the RuvA family. Homotetramer. Forms an RuvA(8)-RuvB(12)-Holliday junction (HJ) complex. HJ DNA is sandwiched between 2 RuvA tetramers; dsDNA enters through RuvA and exits via RuvB. An RuvB hexamer assembles on each DNA strand where it exits the tetramer. Each RuvB hexamer is contacted by two RuvA subunits (via domain III) on 2 adjacent RuvB subunits; this complex drives branch migration. In the full resolvosome a probable DNA-RuvA(4)-RuvB(12)-RuvC(2) complex forms which resolves the HJ.

Its subcellular location is the cytoplasm. The RuvA-RuvB-RuvC complex processes Holliday junction (HJ) DNA during genetic recombination and DNA repair, while the RuvA-RuvB complex plays an important role in the rescue of blocked DNA replication forks via replication fork reversal (RFR). RuvA specifically binds to HJ cruciform DNA, conferring on it an open structure. The RuvB hexamer acts as an ATP-dependent pump, pulling dsDNA into and through the RuvAB complex. HJ branch migration allows RuvC to scan DNA until it finds its consensus sequence, where it cleaves and resolves the cruciform DNA. This chain is Holliday junction branch migration complex subunit RuvA, found in Campylobacter hominis (strain ATCC BAA-381 / DSM 21671 / CCUG 45161 / LMG 19568 / NCTC 13146 / CH001A).